A 180-amino-acid chain; its full sequence is ATP synthase subunit b (180 aa).

Residues 15–35 (LIPEVPELVIGLLAFAIVFFV) traverse the membrane as a helical segment.

It belongs to the ATPase B chain family. As to quaternary structure, F-type ATPases have 2 components, F(1) - the catalytic core - and F(0) - the membrane proton channel. F(1) has five subunits: alpha(3), beta(3), gamma(1), delta(1), epsilon(1). F(0) has three main subunits: a(1), b(2) and c(10-14). The alpha and beta chains form an alternating ring which encloses part of the gamma chain. F(1) is attached to F(0) by a central stalk formed by the gamma and epsilon chains, while a peripheral stalk is formed by the delta and b chains.

The protein resides in the cell membrane. Its function is as follows. F(1)F(0) ATP synthase produces ATP from ADP in the presence of a proton or sodium gradient. F-type ATPases consist of two structural domains, F(1) containing the extramembraneous catalytic core and F(0) containing the membrane proton channel, linked together by a central stalk and a peripheral stalk. During catalysis, ATP synthesis in the catalytic domain of F(1) is coupled via a rotary mechanism of the central stalk subunits to proton translocation. In terms of biological role, component of the F(0) channel, it forms part of the peripheral stalk, linking F(1) to F(0). This Streptomyces avermitilis (strain ATCC 31267 / DSM 46492 / JCM 5070 / NBRC 14893 / NCIMB 12804 / NRRL 8165 / MA-4680) protein is ATP synthase subunit b.